The chain runs to 107 residues: Heme-degrading monooxygenase (107 aa).

Residues 2-94 form the ABM domain; sequence IIVTNTTKIT…YILDNKIAYY (93 aa). N6 serves as a coordination point for Fe cation. Position 76 (H76) interacts with heme.

This sequence belongs to the antibiotic biosynthesis monooxygenase family. Heme-degrading monooxygenase IsdG subfamily. In terms of assembly, homodimer.

It is found in the cytoplasm. It carries out the reaction heme b + 3 reduced [NADPH--hemoprotein reductase] + 3 O2 = biliverdin IXalpha + CO + Fe(2+) + 3 oxidized [NADPH--hemoprotein reductase] + 3 H2O + H(+). In terms of biological role, allows bacterial pathogens to use the host heme as an iron source. Catalyzes the oxidative degradation of the heme macrocyclic porphyrin ring to the biliverdin in the presence of a suitable electron donor such as ascorbate or NADPH--cytochrome P450 reductase, with subsequent release of free iron. This chain is Heme-degrading monooxygenase, found in Bacillus mycoides (strain KBAB4) (Bacillus weihenstephanensis).